Here is a 61-residue protein sequence, read N- to C-terminus: Small ribosomal subunit protein uS14 (61 aa).

Residues Cys-24, Cys-27, Cys-40, and Cys-43 each coordinate Zn(2+).

The protein belongs to the universal ribosomal protein uS14 family. Zinc-binding uS14 subfamily. As to quaternary structure, part of the 30S ribosomal subunit. Contacts proteins S3 and S10. Zn(2+) serves as cofactor.

Its function is as follows. Binds 16S rRNA, required for the assembly of 30S particles and may also be responsible for determining the conformation of the 16S rRNA at the A site. The chain is Small ribosomal subunit protein uS14 from Caldicellulosiruptor bescii (strain ATCC BAA-1888 / DSM 6725 / KCTC 15123 / Z-1320) (Anaerocellum thermophilum).